Here is a 396-residue protein sequence, read N- to C-terminus: E3 ubiquitin-protein ligase NHLRC1 (396 aa).

The RING-type zinc finger occupies 23–69 (CKVCFERFGHRQQRRPRNLPCGHVVCLACVAALAHPRTLALECPFCR). 6 NHL repeats span residues 110-154 (ALTC…FDSG), 158-201 (AHQF…FDFF), 202-242 (GQIK…LEAD), 245-298 (EGVL…FNSS), 299-347 (MQLI…LGKP), and 348-391 (EEFP…FKVM).

Interacts with AGL. Interacts (via the NHL repeats) with EPM2A/laforin. Forms a complex with EPM2A/laforin and HSP70.

Its subcellular location is the endoplasmic reticulum. It is found in the nucleus. It catalyses the reaction S-ubiquitinyl-[E2 ubiquitin-conjugating enzyme]-L-cysteine + [acceptor protein]-L-lysine = [E2 ubiquitin-conjugating enzyme]-L-cysteine + N(6)-ubiquitinyl-[acceptor protein]-L-lysine.. The protein operates within protein modification; protein ubiquitination. In terms of biological role, E3 ubiquitin-protein ligase. Together with the phosphatase EPM2A/laforin, appears to be involved in the clearance of toxic polyglucosan and protein aggregates via multiple pathways. In complex with EPM2A/laforin and HSP70, suppresses the cellular toxicity of misfolded proteins by promoting their degradation through the ubiquitin-proteasome system (UPS). Ubiquitinates the glycogen-targeting protein phosphatase subunits PPP1R3C/PTG and PPP1R3D in a laforin-dependent manner and targets them for proteasome-dependent degradation, thus decreasing glycogen accumulation. Polyubiquitinates EPM2A/laforin and ubiquitinates AGL and targets them for proteasome-dependent degradation. Also promotes proteasome-independent protein degradation through the macroautophagy pathway. The chain is E3 ubiquitin-protein ligase NHLRC1 (Nhlrc1) from Rattus norvegicus (Rat).